The sequence spans 340 residues: Tetraacyldisaccharide 4'-kinase (340 aa).

51 to 58 is a binding site for ATP; the sequence is HMGGAGKT.

It belongs to the LpxK family.

The catalysed reaction is a lipid A disaccharide + ATP = a lipid IVA + ADP + H(+). The protein operates within glycolipid biosynthesis; lipid IV(A) biosynthesis; lipid IV(A) from (3R)-3-hydroxytetradecanoyl-[acyl-carrier-protein] and UDP-N-acetyl-alpha-D-glucosamine: step 6/6. Transfers the gamma-phosphate of ATP to the 4'-position of a tetraacyldisaccharide 1-phosphate intermediate (termed DS-1-P) to form tetraacyldisaccharide 1,4'-bis-phosphate (lipid IVA). The polypeptide is Tetraacyldisaccharide 4'-kinase (Rhodopseudomonas palustris (strain ATCC BAA-98 / CGA009)).